Here is a 93-residue protein sequence, read N- to C-terminus: MRVTLVVLLALFLALQYRLWFGKNSLPDYWRLQQEVSNQKNTNENLERRNQLIYADIEDLREGEDALEERARNELGMVKKDEVFFRLVPDRNP.

The Cytoplasmic segment spans residues 1 to 3 (MRV). Residues 4 to 21 (TLVVLLALFLALQYRLWF) form a helical membrane-spanning segment. The Periplasmic segment spans residues 22-93 (GKNSLPDYWR…FFRLVPDRNP (72 aa)). A coiled-coil region spans residues 28–75 (DYWRLQQEVSNQKNTNENLERRNQLIYADIEDLREGEDALEERARNEL).

Belongs to the FtsB family. As to quaternary structure, part of a complex composed of FtsB, FtsL and FtsQ.

The protein resides in the cell inner membrane. Its function is as follows. Essential cell division protein. May link together the upstream cell division proteins, which are predominantly cytoplasmic, with the downstream cell division proteins, which are predominantly periplasmic. The polypeptide is Cell division protein FtsB (Idiomarina loihiensis (strain ATCC BAA-735 / DSM 15497 / L2-TR)).